The sequence spans 341 residues: UDP-3-O-acylglucosamine N-acyltransferase (341 aa).

His-239 functions as the Proton acceptor in the catalytic mechanism.

This sequence belongs to the transferase hexapeptide repeat family. LpxD subfamily. In terms of assembly, homotrimer.

The catalysed reaction is a UDP-3-O-[(3R)-3-hydroxyacyl]-alpha-D-glucosamine + a (3R)-hydroxyacyl-[ACP] = a UDP-2-N,3-O-bis[(3R)-3-hydroxyacyl]-alpha-D-glucosamine + holo-[ACP] + H(+). It participates in bacterial outer membrane biogenesis; LPS lipid A biosynthesis. Its function is as follows. Catalyzes the N-acylation of UDP-3-O-acylglucosamine using 3-hydroxyacyl-ACP as the acyl donor. Is involved in the biosynthesis of lipid A, a phosphorylated glycolipid that anchors the lipopolysaccharide to the outer membrane of the cell. This chain is UDP-3-O-acylglucosamine N-acyltransferase, found in Photobacterium profundum (strain SS9).